A 325-amino-acid polypeptide reads, in one-letter code: Prenytransferase adrG (325 aa).

A run of 7 helical transmembrane segments spans residues 47–67, 71–91, 117–137, 163–183, 189–209, 236–256, and 258–278; these read LVGVAFSASISSTKIPIAVLL, MLLSIWSIFLRSAGCVWDDLI, ALLLTVALFACGGTVLIFLPW, PQITLMNIGWAVPMAMHSLGL, MTPTVCMFLFIGSVIIMIDVI, LLSYSLLCASTGFLAMAGVLT, and LGLPFFVLSVGGHFCGFWVLL.

Belongs to the UbiA prenyltransferase family. Mg(2+) is required as a cofactor.

It localises to the membrane. The catalysed reaction is 3,5-dimethylorsellinate + (2E,6E)-farnesyl diphosphate = (3R)-3-farnesyl-6-hydroxy-2,3,5-trimethyl-4-oxocyclohexa-1,5-diene-1-carboxylate + diphosphate + H(+). It participates in secondary metabolite biosynthesis; terpenoid biosynthesis. In terms of biological role, prenytransferase; part of the gene cluster that mediates the biosynthesis of andrastins, meroterpenoid compounds that exhibit inhibitory activity against ras farnesyltransferase, suggesting that they could be promising leads for antitumor agents. The first step of the pathway is the synthesis of 3,5-dimethylorsellinic acid (DMOA) by the polyketide synthase adrD via condensation of one acetyl-CoA starter unit with 3 malonyl-CoA units and 2 methylations. DMAO is then converted to farnesyl-DMAO by the prenyltransferase adrG. The methyltransferase adrK catalyzes the methylation of the carboxyl group of farnesyl-DMAO to farnesyl-DMAO methyl ester which is further converted to epoxyfarnesyl-DMAO methyl ester by the FAD-dependent monooxygenase adrH. The terpene cyclase adrI then catalyzes the carbon skeletal rearrangement to generate the andrastin E, the first compound in the pathway having the andrastin scaffold, with the tetracyclic ring system. The post-cyclization tailoring enzymes adrF, adrE, adrJ, and adrA, are involved in the conversion of andrastin E into andrastin A. The short chain dehydrogenase adrF is responsible for the oxidation of the C-3 a hydroxyl group of andrastin E to yield the corresponding ketone, andrastin D. The ketoreductase adrE stereoselectively reduces the carbonyl moiety to reverse the stereochemistry of the C-3 position to yield andrastin F. The acetyltransferase adrJ is the acetyltransferase that attaches the acetyl group to the C-3 hydroxyl group of andrastin F to yield andrastin C. Finally, the cytochrome P450 monooxygenase adrA catalyzes two sequential oxidation reactions of the C-23 methyl group, to generate the corresponding alcohol andrastin B, and aldehyde andrastin A. In Penicillium rubens (strain ATCC 28089 / DSM 1075 / NRRL 1951 / Wisconsin 54-1255) (Penicillium chrysogenum), this protein is Prenytransferase adrG.